We begin with the raw amino-acid sequence, 240 residues long: Caffeoyl-CoA O-methyltransferase 5 (240 aa).

A substrate-binding site is contributed by K14. S-adenosyl-L-methionine is bound by residues T56, E78, 80 to 81, S86, D104, and A133; that span reads GV. D156 is a substrate binding site. Residue D156 participates in a divalent metal cation binding. D158 contacts S-adenosyl-L-methionine. Positions 182 and 183 each coordinate a divalent metal cation. N187 contacts substrate.

This sequence belongs to the class I-like SAM-binding methyltransferase superfamily. Cation-dependent O-methyltransferase family. CCoAMT subfamily. Mg(2+) is required as a cofactor. As to expression, expression steadily increases from the bottom to the top of the plant.

The enzyme catalyses (E)-caffeoyl-CoA + S-adenosyl-L-methionine = (E)-feruloyl-CoA + S-adenosyl-L-homocysteine + H(+). Its pathway is aromatic compound metabolism; phenylpropanoid biosynthesis. In terms of biological role, methylates caffeoyl-CoA to feruloyl-CoA and 5-hydroxyferuloyl-CoA to sinapoyl-CoA. Plays a role in the synthesis of feruloylated polysaccharides. Involved in the reinforcement of the plant cell wall. Also involved in the responding to wounding or pathogen challenge by the increased formation of cell wall-bound ferulic acid polymers. Methylates 5-hydroxyferulolyl-CoA more efficiently than caffeoyl-CoA. This is Caffeoyl-CoA O-methyltransferase 5 (CCOAOMT5) from Nicotiana tabacum (Common tobacco).